A 474-amino-acid polypeptide reads, in one-letter code: Hepatocyte nuclear factor 4-alpha (474 aa).

The segment at residues 57-132 (SALCAICGDR…AGMKKEAVQN (76 aa)) is a DNA-binding region (nuclear receptor). 2 consecutive NR C4-type zinc fingers follow at residues 60-80 (CAICGDRATGKHYGASSCDGC) and 96-120 (CRFSRQCVVDKDKRNQCRYCRLKKC). 2 positions are modified to phosphoserine: S142 and S143. Position 144 is a phosphotyrosine (Y144). The region spanning 147-377 (SSLPSINALL…NLLQEMLLGG (231 aa)) is the NR LBD domain. T166 carries the post-translational modification Phosphothreonine. Position 167 is a phosphoserine (S167). Residues K234 and K307 each participate in a glycyl lysine isopeptide (Lys-Gly) (interchain with G-Cter in ubiquitin) cross-link. S313 is subject to Phosphoserine; by AMPK. The 9aaTAD signature appears at 368 to 376 (NLLQEMLLG). A disordered region spans residues 419–447 (EWPRPRGQAATPETPQPSPPGGSGSEPYK). 2 positions are modified to phosphothreonine: T429 and T432. At S436 the chain carries Phosphoserine. K458 is subject to N6-acetyllysine.

This sequence belongs to the nuclear hormone receptor family. NR2 subfamily. Homodimerization is required for HNF4-alpha to bind to its recognition site. Interacts with CLOCK, BMAL1, CRY1, CRY2, PER1 and PER2. Interacts with NR0B2/SHP; the resulting heterodimer is transcriptionally inactive. Interacts with DDX3X; this interaction disrupts the interaction between HNF4 and NR0B2 that forms inactive heterodimers and enhances the formation of active HNF4 homodimers. Post-translationally, phosphorylated on tyrosine residue(s); phosphorylation is important for its DNA-binding activity. Phosphorylation may directly or indirectly play a regulatory role in the subnuclear distribution. Phosphorylation at Ser-313 by AMPK reduces the ability to form homodimers and bind DNA. Acetylation at Lys-458 lowers transcriptional activation by about two-fold.

Its subcellular location is the nucleus. Its function is as follows. Transcriptional regulator which controls the expression of hepatic genes during the transition of endodermal cells to hepatic progenitor cells, facilitating the recruitment of RNA pol II to the promoters of target genes. Activates the transcription of CYP2C38. Represses the CLOCK-BMAL1 transcriptional activity and is essential for circadian rhythm maintenance and period regulation in the liver and colon cells. The protein is Hepatocyte nuclear factor 4-alpha (HNF4A) of Homo sapiens (Human).